Reading from the N-terminus, the 375-residue chain is Pulmonary surfactant-associated protein D (375 aa).

An N-terminal signal peptide occupies residues 1–21 (MLLFLLSALVLLTQSLGYLEA). S-nitrosocysteine occurs at positions 35 and 40. A disordered region spans residues 43–221 (VESGLPGRDG…DKGAKGESGL (179 aa)). Positions 46–222 (GLPGRDGRDG…KGAKGESGLP (177 aa)) constitute a Collagen-like domain. Residues 50-65 (RDGRDGREGPRGEKGD) are compositionally biased toward basic and acidic residues. Proline 78 is subject to 4-hydroxyproline. Lysine 87 carries the post-translational modification 5-hydroxylysine. A glycan (N-linked (GlcNAc...) asparagine) is linked at asparagine 90. Proline 96 carries the 4-hydroxyproline modification. Position 99 is a 5-hydroxylysine (lysine 99). Positions 105-114 (SGPPGPPGVP) are enriched in pro residues. Low complexity-rich tracts occupy residues 116 to 132 (PAGR…IGPQ) and 138 to 150 (KGEA…VGAP). Proline 171 and proline 177 each carry 4-hydroxyproline. Over residues 173–189 (ERGAPGNAGAAGSAGVM) the composition is skewed to low complexity. Over residues 204–216 (KGDKGVPGDKGAK) the composition is skewed to basic and acidic residues. The stretch at 223 to 251 (DVASLRQQVEALQKQVQHLQAAFSQYKKV) forms a coiled coil. The 115-residue stretch at 260–374 (VGEKIFKTAG…CGEKRLVVCE (115 aa)) folds into the C-type lectin domain. 2 disulfides stabilise this stretch: cysteine 281/cysteine 373 and cysteine 351/cysteine 365.

The protein belongs to the SFTPD family. As to quaternary structure, oligomeric complex of 4 set of homotrimers. Hydroxylation on proline residues within the sequence motif, GXPG, is most likely to be 4-hydroxy as this fits the requirement for 4-hydroxylation in vertebrates. In terms of processing, S-nitrosylation at Cys-35 and Cys-40 alters the quaternary structure which results in a pro-inflammatory chemoattractive signaling activity with macrophages.

The protein resides in the secreted. It is found in the extracellular space. It localises to the extracellular matrix. The protein localises to the surface film. Its function is as follows. Contributes to the lung's defense against inhaled microorganisms, organic antigens and toxins. Interacts with compounds such as bacterial lipopolysaccharides, oligosaccharides and fatty acids and modulates leukocyte action in immune response. May participate in the extracellular reorganization or turnover of pulmonary surfactant. Binds strongly maltose residues and to a lesser extent other alpha-glucosyl moieties. This is Pulmonary surfactant-associated protein D (SFTPD) from Macaca mulatta (Rhesus macaque).